The sequence spans 421 residues: Shaggy-related protein kinase kappa (421 aa).

Residues 1–10 are compositionally biased toward gly residues; sequence MASSGLGNGV. A disordered region spans residues 1–60; it reads MASSGLGNGVGTSRSAKGLKSSSSSVDWLTRDLAETRIRDKVETDDERDSEPDIIDGAGA. Residues 29-42 are compositionally biased toward basic and acidic residues; it reads LTRDLAETRIRDKV. Residues 43–54 show a composition bias toward acidic residues; it reads ETDDERDSEPDI. The region spanning 83 to 367 is the Protein kinase domain; that stretch reads YISEHVVGTG…ALEACIHPLF (285 aa). ATP is bound by residues 89–97 and lysine 112; that span reads VGTGSFGMV. The active-site Proton acceptor is aspartate 208. A Phosphotyrosine modification is found at tyrosine 243.

This sequence belongs to the protein kinase superfamily. CMGC Ser/Thr protein kinase family. GSK-3 subfamily. Autophosphorylated mainly on threonine and serine residues. As to expression, expressed exclusively in inflorescences.

It catalyses the reaction L-seryl-[protein] + ATP = O-phospho-L-seryl-[protein] + ADP + H(+). The catalysed reaction is L-threonyl-[protein] + ATP = O-phospho-L-threonyl-[protein] + ADP + H(+). Its function is as follows. May mediate extracellular signals to regulate transcription in differentiating cells. The chain is Shaggy-related protein kinase kappa (ASK10) from Arabidopsis thaliana (Mouse-ear cress).